Consider the following 217-residue polypeptide: Probable transaldolase (217 aa).

Residue Lys83 is the Schiff-base intermediate with substrate of the active site.

Belongs to the transaldolase family. Type 3B subfamily.

It is found in the cytoplasm. It carries out the reaction D-sedoheptulose 7-phosphate + D-glyceraldehyde 3-phosphate = D-erythrose 4-phosphate + beta-D-fructose 6-phosphate. Its pathway is carbohydrate degradation; pentose phosphate pathway; D-glyceraldehyde 3-phosphate and beta-D-fructose 6-phosphate from D-ribose 5-phosphate and D-xylulose 5-phosphate (non-oxidative stage): step 2/3. Functionally, transaldolase is important for the balance of metabolites in the pentose-phosphate pathway. The chain is Probable transaldolase (tal) from Methanocaldococcus jannaschii (strain ATCC 43067 / DSM 2661 / JAL-1 / JCM 10045 / NBRC 100440) (Methanococcus jannaschii).